A 380-amino-acid chain; its full sequence is Cytochrome b (380 aa).

The next 4 helical transmembrane spans lie at Phe-34 to Met-54, Trp-78 to Ile-99, Trp-114 to Leu-134, and Phe-179 to Thr-199. Heme b contacts are provided by His-84 and His-98. Positions 183 and 197 each coordinate heme b. Residue His-202 participates in a ubiquinone binding. 4 consecutive transmembrane segments (helical) span residues Leu-227 to Thr-247, Leu-289 to His-309, Leu-321 to Ser-341, and Phe-348 to Pro-368.

It belongs to the cytochrome b family. The cytochrome bc1 complex contains 11 subunits: 3 respiratory subunits (MT-CYB, CYC1 and UQCRFS1), 2 core proteins (UQCRC1 and UQCRC2) and 6 low-molecular weight proteins (UQCRH/QCR6, UQCRB/QCR7, UQCRQ/QCR8, UQCR10/QCR9, UQCR11/QCR10 and a cleavage product of UQCRFS1). This cytochrome bc1 complex then forms a dimer. Heme b is required as a cofactor.

It is found in the mitochondrion inner membrane. Its function is as follows. Component of the ubiquinol-cytochrome c reductase complex (complex III or cytochrome b-c1 complex) that is part of the mitochondrial respiratory chain. The b-c1 complex mediates electron transfer from ubiquinol to cytochrome c. Contributes to the generation of a proton gradient across the mitochondrial membrane that is then used for ATP synthesis. The chain is Cytochrome b (MT-CYB) from Falco peregrinus (Peregrine falcon).